The sequence spans 264 residues: Phosphatidylglycerol--prolipoprotein diacylglyceryl transferase (264 aa).

Transmembrane regions (helical) follow at residues 14–34 (IIFS…LIGF), 60–80 (LIYT…VFFY), 98–118 (GGMS…WVSF), 128–148 (ADFI…GNFI), 176–196 (SQLY…NWFI), 203–223 (GSVA…VEYV), and 240–260 (GQLL…WAYS). An a 1,2-diacyl-sn-glycero-3-phospho-(1'-sn-glycerol)-binding site is contributed by R143.

It belongs to the Lgt family.

Its subcellular location is the cell inner membrane. It catalyses the reaction L-cysteinyl-[prolipoprotein] + a 1,2-diacyl-sn-glycero-3-phospho-(1'-sn-glycerol) = an S-1,2-diacyl-sn-glyceryl-L-cysteinyl-[prolipoprotein] + sn-glycerol 1-phosphate + H(+). Its pathway is protein modification; lipoprotein biosynthesis (diacylglyceryl transfer). In terms of biological role, catalyzes the transfer of the diacylglyceryl group from phosphatidylglycerol to the sulfhydryl group of the N-terminal cysteine of a prolipoprotein, the first step in the formation of mature lipoproteins. The chain is Phosphatidylglycerol--prolipoprotein diacylglyceryl transferase from Actinobacillus pleuropneumoniae serotype 7 (strain AP76).